Consider the following 367-residue polypeptide: tRNA-specific 2-thiouridylase MnmA (367 aa).

ATP is bound by residues 13–20 (GLSGGVDS) and M39. The interaction with target base in tRNA stretch occupies residues 99–101 (NPD). The active-site Nucleophile is C104. An intrachain disulfide couples C104 to C200. An ATP-binding site is contributed by G128. Positions 150 to 152 (KDQ) are interaction with tRNA. C200 (cysteine persulfide intermediate) is an active-site residue. The interval 307-308 (RY) is interaction with tRNA.

It belongs to the MnmA/TRMU family.

It localises to the cytoplasm. It carries out the reaction S-sulfanyl-L-cysteinyl-[protein] + uridine(34) in tRNA + AH2 + ATP = 2-thiouridine(34) in tRNA + L-cysteinyl-[protein] + A + AMP + diphosphate + H(+). Its function is as follows. Catalyzes the 2-thiolation of uridine at the wobble position (U34) of tRNA, leading to the formation of s(2)U34. In Neisseria gonorrhoeae (strain ATCC 700825 / FA 1090), this protein is tRNA-specific 2-thiouridylase MnmA.